A 179-amino-acid chain; its full sequence is Large ribosomal subunit protein uL6 (179 aa).

It belongs to the universal ribosomal protein uL6 family. Part of the 50S ribosomal subunit.

This protein binds to the 23S rRNA, and is important in its secondary structure. It is located near the subunit interface in the base of the L7/L12 stalk, and near the tRNA binding site of the peptidyltransferase center. This is Large ribosomal subunit protein uL6 from Rhodococcus opacus (strain B4).